A 435-amino-acid chain; its full sequence is 3-ketoacyl-CoA thiolase (435 aa).

The active-site Acyl-thioester intermediate is C98. Catalysis depends on proton acceptor residues H391 and C421.

Belongs to the thiolase-like superfamily. Thiolase family. In terms of assembly, heterotetramer of two alpha chains (FadJ) and two beta chains (FadI).

It is found in the cytoplasm. It carries out the reaction an acyl-CoA + acetyl-CoA = a 3-oxoacyl-CoA + CoA. It participates in lipid metabolism; fatty acid beta-oxidation. Its function is as follows. Catalyzes the final step of fatty acid oxidation in which acetyl-CoA is released and the CoA ester of a fatty acid two carbons shorter is formed. The protein is 3-ketoacyl-CoA thiolase of Vibrio cholerae serotype O1 (strain ATCC 39541 / Classical Ogawa 395 / O395).